The following is a 579-amino-acid chain: Probable methyl-accepting chemotaxis protein BT9727_0355 (579 aa).

Topologically, residues 1–13 (MKKYWHKLSFLQK) are cytoplasmic. A helical transmembrane segment spans residues 14–34 (NVLLTVLVILTLVGTMGALSF). Over 35–198 (NMFQNSMMSI…ASIVPSTKEK (164 aa)) the chain is Extracellular. The helical transmembrane segment at 199–219 (FIIQGLMFICISVLIATVIQF) threads the bilayer. The Cytoplasmic portion of the chain corresponds to 220–579 (LIVRNALAPL…LQELIGEFKS (360 aa)). The HAMP domain maps to 223–274 (RNALAPLRDLREGLRRVGEGDLNIKLEERSDDIGIINSYFNNTIEKFKGIID). Glutamate 289 carries the glutamate methyl ester (Glu) modification. One can recognise a Methyl-accepting transducer domain in the interval 293–529 (STKENSMAVQ…NIVRVVNELS (237 aa)). Glutamate 548 is modified (glutamate methyl ester (Glu)).

It belongs to the methyl-accepting chemotaxis (MCP) protein family.

It localises to the cell membrane. In terms of biological role, chemotactic-signal transducers respond to changes in the concentration of attractants and repellents in the environment, transduce a signal from the outside to the inside of the cell, and facilitate sensory adaptation through the variation of the level of methylation. In Bacillus thuringiensis subsp. konkukian (strain 97-27), this protein is Probable methyl-accepting chemotaxis protein BT9727_0355.